The following is a 465-amino-acid chain: GTPase Der (465 aa).

EngA-type G domains follow at residues 3–166 (FLVA…LNEY) and 184–358 (IHFS…ACAN). GTP-binding positions include 9–16 (GRANVGKS), 56–60 (DTGGI), 118–121 (NKVD), 190–197 (GRPNVGKS), 237–241 (DTAGV), and 302–305 (NKWD). Residues 359 to 443 (KKITTADATC…PIVFEFKQSE (85 aa)) form the KH-like domain. Residues 446 to 465 (FADRKNKRSKDEGSKSKKVK) are disordered.

This sequence belongs to the TRAFAC class TrmE-Era-EngA-EngB-Septin-like GTPase superfamily. EngA (Der) GTPase family. Associates with the 50S ribosomal subunit.

Functionally, GTPase that plays an essential role in the late steps of ribosome biogenesis. This Francisella tularensis subsp. mediasiatica (strain FSC147) protein is GTPase Der.